We begin with the raw amino-acid sequence, 333 residues long: Cytosolic sulfotransferase 10 (333 aa).

76–81 (KSGTTW) is a 3'-phosphoadenylyl sulfate binding site. His146 (proton acceptor) is an active-site residue. Residues Arg168, Ser176, Tyr234, and 299–301 (RKG) each bind 3'-phosphoadenylyl sulfate.

This sequence belongs to the sulfotransferase 1 family. In terms of tissue distribution, expressed in roots.

It is found in the cytoplasm. Sulfotransferase that utilizes 3'-phospho-5'-adenylyl sulfate (PAPS) as sulfonate donor to specifically catalyze the sulfate conjugation of brassinosteroids, including castasterone (CS), brassinolide (BL), related 24-epimers, and the naturally occurring (22R, 23R)-28-homobrassinosteroids. No activity on phenolic acids, desulfo-glucosinolates, flavonoids, steroids, gibberellic acids, cytokinins, phenylpropanoids, hydroxyjasmonates and coumarins. The chain is Cytosolic sulfotransferase 10 (SOT10) from Arabidopsis thaliana (Mouse-ear cress).